The sequence spans 618 residues: UvrABC system protein C (618 aa).

The 79-residue stretch at 19–97 (SEPGIYRMLD…IKALRPKYNV (79 aa)) folds into the GIY-YIG domain. The UVR domain occupies 208-243 (QIILDALAERMKQAVNQLNFEEAAVLRDQIKNLRLI).

It belongs to the UvrC family. Interacts with UvrB in an incision complex.

It localises to the cytoplasm. In terms of biological role, the UvrABC repair system catalyzes the recognition and processing of DNA lesions. UvrC both incises the 5' and 3' sides of the lesion. The N-terminal half is responsible for the 3' incision and the C-terminal half is responsible for the 5' incision. The polypeptide is UvrABC system protein C (Legionella pneumophila (strain Paris)).